The chain runs to 142 residues: Large ribosomal subunit protein bL17 (142 aa).

The protein belongs to the bacterial ribosomal protein bL17 family. As to quaternary structure, part of the 50S ribosomal subunit. Contacts protein L32.

This is Large ribosomal subunit protein bL17 from Bartonella henselae (strain ATCC 49882 / DSM 28221 / CCUG 30454 / Houston 1) (Rochalimaea henselae).